The chain runs to 520 residues: Cryptochrome DASH (520 aa).

In terms of domain architecture, Photolyase/cryptochrome alpha/beta spans 5 to 141 (RTVICLLRND…RVQTFWGSTL (137 aa)). Residues 479-504 (SRHVNNKSSGPSSSKGRKGSSYTARQ) form a disordered region.

This sequence belongs to the DNA photolyase class-1 family. FAD serves as cofactor. The cofactor is (6R)-5,10-methylene-5,6,7,8-tetrahydrofolate.

May have a photoreceptor function. Has weak cyclobutyl pyrimidine photolyase activity when expressed in E.coli and when tested in vitro. This is Cryptochrome DASH (cry-dash) from Danio rerio (Zebrafish).